We begin with the raw amino-acid sequence, 419 residues long: Gamma-glutamyl phosphate reductase (419 aa).

The protein belongs to the gamma-glutamyl phosphate reductase family.

It is found in the cytoplasm. The enzyme catalyses L-glutamate 5-semialdehyde + phosphate + NADP(+) = L-glutamyl 5-phosphate + NADPH + H(+). It participates in amino-acid biosynthesis; L-proline biosynthesis; L-glutamate 5-semialdehyde from L-glutamate: step 2/2. In terms of biological role, catalyzes the NADPH-dependent reduction of L-glutamate 5-phosphate into L-glutamate 5-semialdehyde and phosphate. The product spontaneously undergoes cyclization to form 1-pyrroline-5-carboxylate. In Yersinia pseudotuberculosis serotype O:1b (strain IP 31758), this protein is Gamma-glutamyl phosphate reductase.